The primary structure comprises 137 residues: 2-iminobutanoate/2-iminopropanoate deaminase (137 aa).

Ser2 bears the N-acetylserine mark. N6-succinyllysine is present on residues Lys13 and Lys67. At Thr74 the chain carries Phosphothreonine. Ser136 is subject to Phosphoserine.

In terms of assembly, homotrimer. Interacts with YTHDF2. Expressed by various malignant neoplasms.

The protein resides in the cytoplasm. The protein localises to the nucleus. Its subcellular location is the peroxisome. It is found in the mitochondrion. The catalysed reaction is 2-iminobutanoate + H2O = 2-oxobutanoate + NH4(+). It carries out the reaction 2-iminopropanoate + H2O = pyruvate + NH4(+). Functionally, catalyzes the hydrolytic deamination of enamine/imine intermediates that form during the course of normal metabolism. May facilitate the release of ammonia from these potentially toxic reactive metabolites, reducing their impact on cellular components. It may act on enamine/imine intermediates formed by several types of pyridoxal-5'-phosphate-dependent dehydratases including L-threonine dehydratase. Its function is as follows. Also promotes endoribonucleolytic cleavage of some transcripts by promoting recruitment of the ribonuclease P/MRP complex. Acts by bridging YTHDF2 and the ribonuclease P/MRP complex. RIDA/HRSP12 binds to N6-methyladenosine (m6A)-containing mRNAs containing a 5'-GGUUC-3' motif: cooperative binding of RIDA/HRSP12 and YTHDF2 to such transcripts lead to recruitment of the ribonuclease P/MRP complex and subsequent endoribonucleolytic cleavage. This Capra hircus (Goat) protein is 2-iminobutanoate/2-iminopropanoate deaminase.